We begin with the raw amino-acid sequence, 347 residues long: uncharacterized protein (347 aa).

Disordered stretches follow at residues 1–40, 72–92, 133–158, 173–209, and 306–347; these read MAQE…SNSM, SCED…IQGS, SDST…QLTL, ENQK…QVSH, and EDPR…PPDF. Residues 15–25 are compositionally biased toward polar residues; sequence PGQNITETTTD. Residues 143–154 show a composition bias toward basic and acidic residues; that stretch reads GDNKDKHPKEKT. Acidic residues predominate over residues 179–194; the sequence is KDDDSVFPESAQEEDS. A compositionally biased stretch (polar residues) spans 195–209; sequence QLPSSSLPGMAQVSH. The segment covering 306 to 318 has biased composition (basic and acidic residues); that stretch reads EDPREANERPREL. Basic residues predominate over residues 319–330; sequence ARKKRFSYRSKR.

This is an uncharacterized protein from Bos taurus (Bovine).